The following is a 269-amino-acid chain: UPF0329 protein ECU04_1660 (269 aa).

Basic and acidic residues predominate over residues 1-12; the sequence is MEERERGKEKGS. Residues 1–74 are disordered; sequence MEERERGKEK…SPKEKSKGEE (74 aa). Basic residues predominate over residues 13–23; sequence KGKGRKKRGKK. Over residues 24-36 the composition is skewed to basic and acidic residues; sequence GAGEAKEESKEED. Residues 37 to 51 show a composition bias toward acidic residues; sequence RGEEEEESVEADVPV.

This sequence belongs to the UPF0329 family.

The protein is UPF0329 protein ECU04_1660 of Encephalitozoon cuniculi (strain GB-M1) (Microsporidian parasite).